We begin with the raw amino-acid sequence, 419 residues long: Dual specificity protein phosphatase 7 (419 aa).

Residues 1-47 are disordered; it reads MKNQLRGPPARAHMSTSGAAAAGGTRAGSEPGAGSGSGAGTGAGAAT. Residues 10–29 show a composition bias toward low complexity; it reads ARAHMSTSGAAAAGGTRAGS. A compositionally biased stretch (gly residues) spans 31-47; the sequence is PGAGSGSGAGTGAGAAT. A Rhodanese domain is found at 68–187; sequence GGASLLLLDC…FQTEYSEHCE (120 aa). The tract at residues 216-240 is disordered; the sequence is CSDGESDRELPSSATESDGSPVPSS. The segment covering 227–240 has biased composition (polar residues); sequence SSATESDGSPVPSS. Residues 244–387 enclose the Tyrosine-protein phosphatase domain; it reads FPVQILPYLY…LLDFERTLGL (144 aa). Cys-331 acts as the Phosphocysteine intermediate in catalysis. 331–337 lines the substrate pocket; it reads CLAGISR.

The protein belongs to the protein-tyrosine phosphatase family. Non-receptor class dual specificity subfamily. Interacts with MAPK1/ERK2; the interaction enhances DUSP7 phosphatase activity. As to expression, strongly expressed in liver. Expressed at significantly higher levels in malignant hematopoietic cells than in corresponding non-malignant cells.

It is found in the cytoplasm. It catalyses the reaction O-phospho-L-tyrosyl-[protein] + H2O = L-tyrosyl-[protein] + phosphate. It carries out the reaction O-phospho-L-seryl-[protein] + H2O = L-seryl-[protein] + phosphate. The enzyme catalyses O-phospho-L-threonyl-[protein] + H2O = L-threonyl-[protein] + phosphate. Its activity is regulated as follows. Strongly inhibited by sodium orthovanadate. Its function is as follows. Dual specificity protein phosphatase. Shows high activity towards MAPK1/ERK2. Also has lower activity towards MAPK14 and MAPK8. In arrested oocytes, plays a role in meiotic resumption. Promotes nuclear envelope breakdown and activation of the CDK1/Cyclin-B complex in oocytes, probably by dephosphorylating and inactivating the conventional protein kinase C (cPKC) isozyme PRKCB. May also inactivate PRKCA and/or PRKCG. Also important in oocytes for normal chromosome alignment on the metaphase plate and progression to anaphase, where it might regulate activity of the spindle-assembly checkpoint (SAC) complex. This is Dual specificity protein phosphatase 7 from Homo sapiens (Human).